The primary structure comprises 518 residues: MAQISSMGQGIRTPNLNSYLPKTQKVPLFSHSIFIGSKKITQNSAKSLWVSKEDSVLRVAKSPFRISASVVTAQKPNEIVLQPIKDISGTVKLPGSKSLSNRILLLAALSKGRTVVDNLLSSDDIHYMLGALKTLGLHVEDDNENQRAIVEGCGGQFPVGKKSEEEIQLFLGNAGTAMRPLTAAVTVAGGHSRYVLDGVPRMRERPIGDLVDGLKQLGAEVDCFLGTNCPPVRIVSKGGLPGGKVKLSGSISSQYLTALLMAAPLALGDVEIEIIDKLISVPYVEMTLKLMERFGVSVEHTSSWDKFLVRGGQKYKSPGKAYVEGDASSASYFLAGAAVTGGTVTVEGCGTSSLQGDVKFAEVLEKMGAEVTWTENSVTVKGPPRNSSGMKHLRAVDVNMNKMPDVAMTLAVVALFADGPTAIRDVASWRVKETERMIAICTELRKLGATVVEGSDYCIITPPEKLNVTEIDTYDDHRMAMAFSLAACADVPVTIKDPGCTRKTFPNYFDVLQQYSKH.

The transit peptide at 1–74 directs the protein to the chloroplast; that stretch reads MAQISSMGQG…RISASVVTAQ (74 aa). 3 residues coordinate 3-phosphoshikimate: Lys97, Ser98, and Arg102. Phosphoenolpyruvate is bound at residue Lys97. Positions 175 and 205 each coordinate phosphoenolpyruvate. 3-phosphoshikimate is bound by residues Ser252, Ser253, Gln254, Ser280, Asp405, and Lys432. A phosphoenolpyruvate-binding site is contributed by Gln254. The Proton acceptor role is filled by Asp405. Residues Arg436, Arg478, and Lys503 each coordinate phosphoenolpyruvate.

The protein belongs to the EPSP synthase family.

The protein localises to the plastid. Its subcellular location is the chloroplast. The enzyme catalyses 3-phosphoshikimate + phosphoenolpyruvate = 5-O-(1-carboxyvinyl)-3-phosphoshikimate + phosphate. It participates in metabolic intermediate biosynthesis; chorismate biosynthesis; chorismate from D-erythrose 4-phosphate and phosphoenolpyruvate: step 6/7. In terms of biological role, catalyzes the transfer of the enolpyruvyl moiety of phosphoenolpyruvate (PEP) to the 5-hydroxyl of shikimate-3-phosphate (S3P) to produce enolpyruvyl shikimate-3-phosphate and inorganic phosphate. In Nicotiana tabacum (Common tobacco), this protein is 3-phosphoshikimate 1-carboxyvinyltransferase 1, chloroplastic (EPSPS-1).